Reading from the N-terminus, the 130-residue chain is Histone H2A.2 (130 aa).

Lys4 and Lys6 each carry N6-acetyllysine. The residue at position 104 (Gln104) is an N5-methylglutamine. A Glycyl lysine isopeptide (Lys-Gly) (interchain with G-Cter in SUMO) cross-link involves residue Lys125. A Phosphoserine modification is found at Ser127. The short motif at 127–128 (SQ) is the [ST]-Q motif element.

It belongs to the histone H2A family. The nucleosome is a histone octamer containing two molecules each of H2A, H2B, H3 and H4 assembled in one H3-H4 heterotetramer and two H2A-H2B heterodimers. The octamer wraps approximately 147 bp of DNA. Post-translationally, phosphorylated to form H2AS128ph (gamma-H2A) in response to DNA double-strand breaks (DSBs) generated by exogenous genotoxic agents and by stalled replication forks. Phosphorylation is dependent on the DNA damage checkpoint kinases MEC1/ATR and TEL1/ATM, spreads on either side of a detected DSB site and may mark the surrounding chromatin for recruitment of proteins required for DNA damage signaling and repair. Gamma-H2A is removed from the DNA prior to the strand invasion-primer extension step of the repair process and subsequently dephosphorylated. Dephosphorylation is necessary for efficient recovery from the DNA damage checkpoint. Acetylated by ESA1 to form H2AK4ac and H2AK7ac.

The protein localises to the nucleus. The protein resides in the chromosome. Functionally, core component of nucleosome which plays a central role in DNA double strand break (DSB) repair. Nucleosomes wrap and compact DNA into chromatin, limiting DNA accessibility to the cellular machineries which require DNA as a template. Histones thereby play a central role in transcription regulation, DNA repair, DNA replication and chromosomal stability. DNA accessibility is regulated via a complex set of post-translational modifications of histones, also called histone code, and nucleosome remodeling. The protein is Histone H2A.2 (HTA2) of Meyerozyma guilliermondii (strain ATCC 6260 / CBS 566 / DSM 6381 / JCM 1539 / NBRC 10279 / NRRL Y-324) (Yeast).